Here is a 450-residue protein sequence, read N- to C-terminus: N-lysine methyltransferase SETD6 (450 aa).

Residues 1–10 (MATQAKRRRV) show a composition bias toward basic residues. Positions 1–20 (MATQAKRRRVAGPAGSDDDP) are disordered. Residues 39-263 (PKVAVSRQGT…KGHEIFNTYG (225 aa)) form the SET domain. Lysine 40 carries the N6-methylated lysine; by autocatalysis modification. 50-52 (AGY) lines the S-adenosyl-L-methionine pocket. Substrate is bound at residue tryptophan 99. Lysine 156 bears the N6-methylated lysine; by autocatalysis mark. Tyrosine 200 provides a ligand contact to S-adenosyl-L-methionine. Positions 201 and 203 each coordinate substrate. S-adenosyl-L-methionine contacts are provided by residues 228-229 (NH) and tyrosine 274. At lysine 349 the chain carries N6-methylated lysine; by autocatalysis.

The protein belongs to the class V-like SAM-binding methyltransferase superfamily. Histone-lysine methyltransferase family. SETD6 subfamily. In terms of assembly, monomer, homodimer and homotrimer; these structures are stabilized in the presence of S-adenosyl-L-methionine (SAM). Post-translationally, automethylated.

Its subcellular location is the nucleus. The catalysed reaction is L-lysyl-[protein] + S-adenosyl-L-methionine = N(6)-methyl-L-lysyl-[protein] + S-adenosyl-L-homocysteine + H(+). It catalyses the reaction L-lysyl(8)-[histone H2AZ] + S-adenosyl-L-methionine = N(6)-methyl-L-lysyl(8)-[histone H2AZ] + S-adenosyl-L-homocysteine + H(+). Protein-lysine N-methyltransferase. Monomethylates 'Lys-310' of the RELA subunit of NF-kappa-B complex, leading to down-regulation of NF-kappa-B transcription factor activity. Monomethylates 'Lys-8' of H2AZ (H2AZK8me1). Required for the maintenance of embryonic stem cell self-renewal. Methylates PAK4. This Bos taurus (Bovine) protein is N-lysine methyltransferase SETD6 (SETD6).